The sequence spans 90 residues: Putative transcript Y 12 protein (90 aa).

The chain is Putative transcript Y 12 protein (TTTY12) from Homo sapiens (Human).